Consider the following 641-residue polypeptide: MAVIGALPKEVAEAVSASRLLVVGAGGIGCELLKNLVLTGFTNLDVIDLDTIDVSNLNRQFLFQKKHVGRSKAQVAKESVLQFCPDASITAYHDSIMNPDYNVEFFKQFTMAMNALDNNAARNHVNRMCLAAGIPLIESGTAGYLGQVSVIKKGVTECYECQPKPTQKTFPGCTIRNTPSEPIHCIVWAKYLFNQLFGEEDADQEVAPDIADPEAAWDPTKAAERANASNVDGDIKRVSTKQWAKSTGYDPIKLFNKLFRDDIKYLLTMDRLWRKRKPPIPLEWASLHNKENCSEIQNESSLLGLKDQKVLNVASYAQLFSKSVETLREQLREKGDGAELVWDKDDVPAMDFVTAAANLRMHIFSMNMKSKFDVKSMAGNIIPAIATTNAVISGLIVLEGLKILSGNTEQCRTVFLNKQPNPRKKLLVPCSLDPPNPSCYVCAIKPEVTVKLNVHKVTVQMLQDKILKEKFAMVAPDVQIEDGKGTILISSEAGETDANNHRKISEFGIRNSSQLQADDFLQDYTLMMNILHSDEMEKDVDFEVVGDVPEKGPQKPPEESVKNITNGSDDGAQPSTSKAQDQDDVLIVDSDEESPSSSNADVGMESASLKRKLPDEEAVSSTKRKRIEPPVEEDDDIIALD.

ATP contacts are provided by residues 24-29, Asp48, 56-59, Lys72, 95-96, and 117-122; these read GAGGIG, NLNR, SI, and DNNAAR. Zn(2+) contacts are provided by Cys158 and Cys161. The active-site Glycyl thioester intermediate is Cys173. The Zn(2+) site is built by Cys439 and Cys442. The segment at 546 to 641 is disordered; sequence GDVPEKGPQK…EEDDDIIALD (96 aa). Residues 548–561 show a composition bias toward basic and acidic residues; sequence VPEKGPQKPPEESV. Positions 562–579 are enriched in polar residues; the sequence is KNITNGSDDGAQPSTSKA. Acidic residues-rich tracts occupy residues 582–594 and 630–641; these read QDDV…DEES and PVEEDDDIIALD.

It belongs to the ubiquitin-activating E1 family. As to quaternary structure, heterodimer of sae1 and uba2/sae2. The heterodimer corresponds to the two domains that are encoded on a single polypeptide chain in ubiquitin-activating enzyme E1. Interacts with ube2i.

The protein resides in the nucleus. It participates in protein modification; protein sumoylation. The heterodimer acts as an E1 ligase for sumo1, sumo2, and sumo3. It mediates ATP-dependent activation of sumo proteins followed by formation of a thioester bond between a sumo protein and a conserved active site cysteine residue on uba2/sae2. This chain is SUMO-activating enzyme subunit 2-B (uba2-b), found in Xenopus laevis (African clawed frog).